A 111-amino-acid chain; its full sequence is Prostate and testis expressed protein 2 (111 aa).

A signal peptide spans 1–18 (MFVLVMICLFCQYWGVLN). In terms of domain architecture, UPAR/Ly6 spans 27–108 (LLCYKCKKYH…CKHSNYCNLP (82 aa)). Cystine bridges form between C29/C55, C32/C40, C47/C78, and C82/C99.

Belongs to the PATE family. Expressed in prostate, testis, brain and lung.

It is found in the secreted. The sequence is that of Prostate and testis expressed protein 2 (Pate2) from Mus musculus (Mouse).